The sequence spans 463 residues: Lactaldehyde dehydrogenase (463 aa).

220–225 (GSSKVG) is a binding site for NAD(+). Active-site residues include Glu-240 and Cys-274.

This sequence belongs to the aldehyde dehydrogenase family. Homotetramer.

The enzyme catalyses (S)-lactaldehyde + NAD(+) + H2O = (S)-lactate + NADH + 2 H(+). It functions in the pathway cofactor biosynthesis; coenzyme F420 biosynthesis. In terms of biological role, involved in F420 biosynthesis through the oxidation of lactaldehyde to lactate. The substrate preference order is propionaldehyde &gt; DL-lactaldehyde, DL-glyceraldehyde &gt; crotonaldehyde &gt; glycolaldehyde &gt; acetaldehyde, acrolein &gt; formaldehyde. No activity was observed towards methylglyoxal or glyceraldehyde-3-phosphate. Has a preference for NAD over NADP. In Methanocaldococcus jannaschii (strain ATCC 43067 / DSM 2661 / JAL-1 / JCM 10045 / NBRC 100440) (Methanococcus jannaschii), this protein is Lactaldehyde dehydrogenase.